Reading from the N-terminus, the 370-residue chain is Ubiquinone biosynthesis O-methyltransferase, mitochondrial (370 aa).

The transit peptide at methionine 1–tyrosine 86 directs the protein to the mitochondrion. Residue arginine 125 participates in S-adenosyl-L-methionine binding. Lysine 144 and lysine 150 each carry N6-acetyllysine. Residues glycine 155 and aspartate 176 each contribute to the S-adenosyl-L-methionine site. At lysine 197 the chain carries N6-acetyllysine. Position 223 (serine 223) interacts with S-adenosyl-L-methionine. Residues glutamate 224, glutamate 227, and histidine 228 each contribute to the Mg(2+) site. The interval alanine 336–threonine 370 is disordered.

It belongs to the class I-like SAM-binding methyltransferase superfamily. UbiG/COQ3 family. Component of a multi-subunit COQ enzyme complex, composed of at least COQ3, COQ4, COQ5, COQ6, COQ7 and COQ9. Requires Mg(2+) as cofactor.

It localises to the mitochondrion inner membrane. It carries out the reaction 3,4-dihydroxy-5-(all-trans-decaprenyl)benzoate + S-adenosyl-L-methionine = 4-hydroxy-3-methoxy-5-(all-trans-decaprenyl)benzoate + S-adenosyl-L-homocysteine + H(+). The catalysed reaction is a 3-demethylubiquinone + S-adenosyl-L-methionine = a ubiquinone + S-adenosyl-L-homocysteine. It catalyses the reaction 3-demethylubiquinol-10 + S-adenosyl-L-methionine = ubiquinol-10 + S-adenosyl-L-homocysteine + H(+). Its pathway is cofactor biosynthesis; ubiquinone biosynthesis. Functionally, O-methyltransferase required for two non-consecutive steps during ubiquinone biosynthesis. Catalyzes the 2 O-methylation of 3,4-dihydroxy-5-(all-trans-decaprenyl)benzoic acid into 4-hydroxy-3-methoxy-5-(all-trans-decaprenyl)benzoic acid. Also catalyzes the last step of ubiquinone biosynthesis by mediating methylation of 3-demethylubiquinone into ubiquinone. Also able to mediate the methylation of 3-demethylubiquinol-10 into ubiquinol-10. The chain is Ubiquinone biosynthesis O-methyltransferase, mitochondrial from Mus musculus (Mouse).